We begin with the raw amino-acid sequence, 514 residues long: Beta-secretase 2 (514 aa).

A signal peptide spans 1–19 (MGALLRALLLLVLAQWLLS). Residues 20–62 (AVPALAPAPFTLPLQVAGATNHRASAVPGLGTPELPRADGLAL) constitute a propeptide that is removed on maturation. Residues 20 to 469 (AVPALAPAPF…NEPILWIVSY (450 aa)) are Extracellular-facing. Positions 88–425 (YYLEMLIGTP…DRAQRRVGFA (338 aa)) constitute a Peptidase A1 domain. The active site involves D106. The N-linked (GlcNAc...) asparagine glycan is linked to N166. 3 cysteine pairs are disulfide-bonded: C229–C429, C288–C453, and C340–C389. D299 is a catalytic residue. Residue N362 is glycosylated (N-linked (GlcNAc...) asparagine). Residues 470–490 (ALMSVCGAILLVLILLLLLPL) form a helical membrane-spanning segment. The Cytoplasmic segment spans residues 491-514 (HCRHAPRDPEVVNDESSLVRHRWK).

This sequence belongs to the peptidase A1 family. Monomer. Interacts with RTN3 and RTN4. In terms of processing, undergoes autoproteolytic cleavage. Post-translationally, glycosylated. In terms of tissue distribution, high expression in pancreatic islets. Expressed at much lower levels in the pituitary, colon, and ovaries and is nearly absent from all the other tissues.

The protein localises to the cell membrane. It is found in the golgi apparatus. Its subcellular location is the endoplasmic reticulum. The protein resides in the endosome. It localises to the melanosome. It catalyses the reaction Broad endopeptidase specificity. Cleaves Glu-Val-Asn-Leu-|-Asp-Ala-Glu-Phe in the Swedish variant of Alzheimer's amyloid precursor protein.. Functionally, responsible for the proteolytic processing of the amyloid precursor protein (APP). Cleaves APP, between residues 690 and 691, leading to the generation and extracellular release of beta-cleaved soluble APP, and a corresponding cell-associated C-terminal fragment which is later released by gamma-secretase. It has also been shown that it can cleave APP between residues 671 and 672. Involved in the proteolytic shedding of PMEL at early stages of melanosome biogenesis. Cleaves PMEL within the M-beta fragment to release the amyloidogenic PMEL luminal fragment containing M-alpha and a small portion of M-beta N-terminus. This is a prerequisite step for subsequent processing and assembly of PMEL fibrils into amyloid sheets. Responsible also for the proteolytic processing of CLTRN in pancreatic beta cells. This chain is Beta-secretase 2 (Bace2), found in Mus musculus (Mouse).